The primary structure comprises 956 residues: Calsyntenin-3 (956 aa).

An N-terminal signal peptide occupies residues methionine 1 to glycine 20. Over asparagine 21–alanine 850 the chain is Extracellular. Cadherin domains follow at residues isoleucine 30–phenylalanine 151 and valine 152–phenylalanine 271. N-linked (GlcNAc...) asparagine glycans are attached at residues asparagine 333, asparagine 353, asparagine 513, and asparagine 743. The helical transmembrane segment at alanine 851–phenylalanine 871 threads the bilayer. Over arginine 872–tyrosine 956 the chain is Cytoplasmic. Residues glycine 921–serine 937 are compositionally biased toward acidic residues. The tract at residues glycine 921–tyrosine 956 is disordered. Residues aspartate 938 to tyrosine 956 are compositionally biased toward basic and acidic residues.

This sequence belongs to the calsyntenin family. In terms of assembly, homooligomer and heterooligomer; mediates both homophilic and heterophilc interactions with clstn1 and clstn2 paralogs via cadherin domains. Interacts (via cadherin domains) with both alpha and beta isoforms of neurexins. By 48 hours post-fertilization (hpf), widely expressed in the brain, with strong expression in the telencephalon and the midbrain. Not expressed in the optic tectum.

Its subcellular location is the postsynaptic cell membrane. It is found in the endoplasmic reticulum membrane. The protein localises to the golgi apparatus membrane. Its function is as follows. Synaptic adhesion molecule. Promotes synapse development by acting as a cell adhesion molecule at the postsynaptic membrane, which associates with presynaptic neurexins. The chain is Calsyntenin-3 from Danio rerio (Zebrafish).